Consider the following 482-residue polypeptide: Methylenetetrahydrofolate--tRNA-(uracil-5-)-methyltransferase TrmFO (482 aa).

20–25 (GGGLAG) contributes to the FAD binding site.

Belongs to the MnmG family. TrmFO subfamily. FAD is required as a cofactor.

The protein resides in the cytoplasm. It carries out the reaction uridine(54) in tRNA + (6R)-5,10-methylene-5,6,7,8-tetrahydrofolate + NADH + H(+) = 5-methyluridine(54) in tRNA + (6S)-5,6,7,8-tetrahydrofolate + NAD(+). It catalyses the reaction uridine(54) in tRNA + (6R)-5,10-methylene-5,6,7,8-tetrahydrofolate + NADPH + H(+) = 5-methyluridine(54) in tRNA + (6S)-5,6,7,8-tetrahydrofolate + NADP(+). Catalyzes the folate-dependent formation of 5-methyl-uridine at position 54 (M-5-U54) in all tRNAs. This Rhodopseudomonas palustris (strain HaA2) protein is Methylenetetrahydrofolate--tRNA-(uracil-5-)-methyltransferase TrmFO.